A 464-amino-acid chain; its full sequence is MNNDNTEVLENYPQDGLQSNSHIIWKGIQSRLHKFYGNAIYDSWLSVLLYVSTESGKVLLSAPTRFIKEWILVHYLDQILKYWQDEDQSICSVDICVVSNQDPNLLVDIKDRVDRGIKGNCDNVSSPLDPRFTFDNFVVGKPNELAFAAARRVAESNSPISGSNPLFLYGGVGLGKTHLMHAIAWYIIKSCSKRKIAYLSAEKFMYQYVTALRSKDIMLFKEQFRSVDILMVDDVQFISGKDSTQEEFFHTFNALIDQNKQLVISADRSPSDLDGVEERIKSRLGWGLVADINETTFELRLGILQLKVEKMGINIPNKVLEFLAKNIKSNIRELEGALNKVVAHSSLVGCSITLDTASDILSDLLRANHKSVTLECIQKKVAEFFNIKVSDMYSTRRLRTLARPRQIAMYLSKKLTQKSLPEIGKSFGGRDHATVIHAVKQIEKLMDTDSKLRDDINLLNRMLR.

A domain I, interacts with DnaA modulators region spans residues 1 to 90; that stretch reads MNNDNTEVLE…KYWQDEDQSI (90 aa). Residues 90–126 are domain II; sequence ICSVDICVVSNQDPNLLVDIKDRVDRGIKGNCDNVSS. The domain III, AAA+ region stretch occupies residues 127–345; the sequence is PLDPRFTFDN…GALNKVVAHS (219 aa). Positions 173, 175, 176, and 177 each coordinate ATP. The domain IV, binds dsDNA stretch occupies residues 346–464; it reads SLVGCSITLD…DINLLNRMLR (119 aa).

This sequence belongs to the DnaA family. In terms of assembly, oligomerizes as a right-handed, spiral filament on DNA at oriC.

It is found in the cytoplasm. Its function is as follows. Plays an essential role in the initiation and regulation of chromosomal replication. ATP-DnaA binds to the origin of replication (oriC) to initiate formation of the DNA replication initiation complex once per cell cycle. Binds the DnaA box (a 9 base pair repeat at the origin) and separates the double-stranded (ds)DNA. Forms a right-handed helical filament on oriC DNA; dsDNA binds to the exterior of the filament while single-stranded (ss)DNA is stabiized in the filament's interior. The ATP-DnaA-oriC complex binds and stabilizes one strand of the AT-rich DNA unwinding element (DUE), permitting loading of DNA polymerase. After initiation quickly degrades to an ADP-DnaA complex that is not apt for DNA replication. Binds acidic phospholipids. The protein is Chromosomal replication initiator protein DnaA of Ehrlichia ruminantium (strain Gardel).